Reading from the N-terminus, the 219-residue chain is Germin-like protein subfamily 2 member 1 (219 aa).

An N-terminal signal peptide occupies residues 1–21 (MASPTLTLLLLLTTVSFFISS). Residues Cys32 and Cys47 are joined by a disulfide bond. The Cupin type-1 domain occupies 61–209 (QGLAKPGLTN…AFQTSPGTVK (149 aa)). Asn70 is a glycosylation site (N-linked (GlcNAc...) asparagine). His109, His111, Glu116, and His155 together coordinate Mn(2+).

The protein belongs to the germin family. In terms of assembly, oligomer (believed to be a pentamer but probably hexamer).

The protein resides in the secreted. It is found in the extracellular space. Its subcellular location is the apoplast. May play a role in plant defense. Probably has no oxalate oxidase activity even if the active site is conserved. The protein is Germin-like protein subfamily 2 member 1 (GLP4) of Arabidopsis thaliana (Mouse-ear cress).